The following is a 190-amino-acid chain: UPF0200 protein MTH_434 (190 aa).

ATP is bound at residue 10-17 (GMPGAGKG).

It belongs to the UPF0200 family.

This is UPF0200 protein MTH_434 from Methanothermobacter thermautotrophicus (strain ATCC 29096 / DSM 1053 / JCM 10044 / NBRC 100330 / Delta H) (Methanobacterium thermoautotrophicum).